Consider the following 660-residue polypeptide: MAPEARQLKVHLRENEAVAQCVLEKWRSMEEKPGGLKENLAHTLYKSYRNVCAAKEPIRSLKDLYQIKGVGKWVIRQLKGSFPESSPDLSPPESNAAGEKGKKAGGSKRYVPQKNSAAYAILITLHRETINGKSHMKKQELIDATEASGLSRSAIGPDKSKAKPGAFASSQKDWYTGWSCMKTLTSKGLVAKSGNPAKYMITEEGKSTALECLSRSGLDDHAAPLVINSAPDTSNASHKLNNICMTSFVETSSGPSRAIGRPKTSIANPATKTSPEVTYLTSQESLNYNSDVRTAENCAEEIILSDSDSEELYTENYPLIGSEEFTERVAPPILNASNSGKTTTNYRFSDCSASISPRSSEGTFEMQSSSTMGIAEFNMLDNDTVCMDNSILAMPPRRSSKNFLEDYEVVLILDDRENFGGRSRKTVDNIHSQFRVPVEIKHLPVGDGIWIARDRKLHTEYVLDFIVERKNVADLCSSITDNRYKDQKLRLKKCGLRKLIYLVEGDPNPLDTSERIKTACFTTEILEGFDVQRTPGYAETVRTYGNLTHSITEYYSTHFSTGANTSQVCLTYDEFTKKCDDLKKITVSDVFALQLMQVPQVTEEAALAVIGLYPTLFSLAKAYSMLDGDTHAQEKMLKNKSTLINAGASRNIFKLVWAEG.

Positions 62–81 (KDLYQIKGVGKWVIRQLKGS) match the Helix-hairpin-helix motif 1 motif. Low complexity predominate over residues 82–98 (FPESSPDLSPPESNAAG). The tract at residues 82 to 109 (FPESSPDLSPPESNAAGEKGKKAGGSKR) is disordered. One can recognise an ERCC4 domain in the interval 411–506 (LILDDRENFG…RKLIYLVEGD (96 aa)). The Helix-hairpin-helix motif 2 signature appears at 586–623 (TVSDVFALQLMQVPQVTEEAALAVIGLYPTLFSLAKAY).

Belongs to the XPF family. In terms of assembly, forms a heterodimer with EME1. Interacts with RAD54. Requires Mg(2+) as cofactor. Ca(2+) is required as a cofactor. Low expression in shoots and roots from etiolated seedlings, and panicles after meiosis; moderate expression in young panicles under differentiation of floral organs before and during meiosis; and high expression in mature leaves.

The protein localises to the nucleus. Interacts with EME1 to form a DNA structure-specific endonuclease with substrate preference for branched DNA structures with a 5'-end at the branch nick. Typical substrates include 3'-flap structures, D-loops, replication forks, nicked Holliday junctions and also intact Holliday junctions with a reduced efficiency. May be required in mitosis for the processing of stalled or collapsed replication fork intermediates. Plays a role in DNA repair and in genotoxic stress-induced homologous recombination (HR) in somatic cells. Mediates a subset of meiotic recombination events that are insensitive to crossover interference. The protein is Crossover junction endonuclease MUS81 (MUS81) of Oryza sativa subsp. japonica (Rice).